The chain runs to 194 residues: Holliday junction branch migration complex subunit RuvA (194 aa).

The interval 1–64 is domain I; the sequence is MIGRLRGILA…EDSVALYGFL (64 aa). Residues 65–140 are domain II; the sequence is REGERRLFRD…RAADFSSGAP (76 aa). Residues 140 to 144 form a flexible linker region; the sequence is PITGQ. The tract at residues 145-194 is domain III; that stretch reads LGPDAVSEATVALQQLGYKPAEAARMARDAGAEGDEVATVIRKALQAALR.

Belongs to the RuvA family. As to quaternary structure, homotetramer. Forms an RuvA(8)-RuvB(12)-Holliday junction (HJ) complex. HJ DNA is sandwiched between 2 RuvA tetramers; dsDNA enters through RuvA and exits via RuvB. An RuvB hexamer assembles on each DNA strand where it exits the tetramer. Each RuvB hexamer is contacted by two RuvA subunits (via domain III) on 2 adjacent RuvB subunits; this complex drives branch migration. In the full resolvosome a probable DNA-RuvA(4)-RuvB(12)-RuvC(2) complex forms which resolves the HJ.

Its subcellular location is the cytoplasm. In terms of biological role, the RuvA-RuvB-RuvC complex processes Holliday junction (HJ) DNA during genetic recombination and DNA repair, while the RuvA-RuvB complex plays an important role in the rescue of blocked DNA replication forks via replication fork reversal (RFR). RuvA specifically binds to HJ cruciform DNA, conferring on it an open structure. The RuvB hexamer acts as an ATP-dependent pump, pulling dsDNA into and through the RuvAB complex. HJ branch migration allows RuvC to scan DNA until it finds its consensus sequence, where it cleaves and resolves the cruciform DNA. This is Holliday junction branch migration complex subunit RuvA from Xanthomonas euvesicatoria pv. vesicatoria (strain 85-10) (Xanthomonas campestris pv. vesicatoria).